Reading from the N-terminus, the 642-residue chain is Threonine--tRNA ligase (642 aa).

The TGS domain occupies 1–61 (MPVITLPDGS…ETDAELSIIT (61 aa)). The segment at 243-534 (DHRKIGKQLD…LIEEYAGRFP (292 aa)) is catalytic. Zn(2+)-binding residues include C334, H385, and H511.

This sequence belongs to the class-II aminoacyl-tRNA synthetase family. In terms of assembly, homodimer. Requires Zn(2+) as cofactor.

Its subcellular location is the cytoplasm. It carries out the reaction tRNA(Thr) + L-threonine + ATP = L-threonyl-tRNA(Thr) + AMP + diphosphate + H(+). Functionally, catalyzes the attachment of threonine to tRNA(Thr) in a two-step reaction: L-threonine is first activated by ATP to form Thr-AMP and then transferred to the acceptor end of tRNA(Thr). Also edits incorrectly charged L-seryl-tRNA(Thr). This Shewanella putrefaciens (strain CN-32 / ATCC BAA-453) protein is Threonine--tRNA ligase.